Here is a 165-residue protein sequence, read N- to C-terminus: MVTTRKESAGDASLNAGLEGARVLIVEGRYYEALADELLAGARAVLEAAGVEVEVITVPGALEVPIAAEIALEAAEITGNAVDAVVGLGVVIRGETYHFEIVAGESARGLMDLGMAHALPVGNGILTVDTEAQAWERARVSEGNKGGGAAEAALTLLRLRRRLEA.

5-amino-6-(D-ribitylamino)uracil contacts are provided by residues Y30, 61–63 (ALE), and 90–92 (VVI). 95–96 (ET) contacts (2S)-2-hydroxy-3-oxobutyl phosphate. The active-site Proton donor is the H98. N123 is a 5-amino-6-(D-ribitylamino)uracil binding site. (2S)-2-hydroxy-3-oxobutyl phosphate is bound at residue R137.

Belongs to the DMRL synthase family.

It catalyses the reaction (2S)-2-hydroxy-3-oxobutyl phosphate + 5-amino-6-(D-ribitylamino)uracil = 6,7-dimethyl-8-(1-D-ribityl)lumazine + phosphate + 2 H2O + H(+). The protein operates within cofactor biosynthesis; riboflavin biosynthesis; riboflavin from 2-hydroxy-3-oxobutyl phosphate and 5-amino-6-(D-ribitylamino)uracil: step 1/2. Its function is as follows. Catalyzes the formation of 6,7-dimethyl-8-ribityllumazine by condensation of 5-amino-6-(D-ribitylamino)uracil with 3,4-dihydroxy-2-butanone 4-phosphate. This is the penultimate step in the biosynthesis of riboflavin. The chain is 6,7-dimethyl-8-ribityllumazine synthase from Xanthobacter autotrophicus (strain ATCC BAA-1158 / Py2).